The primary structure comprises 845 residues: ABC transporter A family member 9 (845 aa).

A run of 7 helical transmembrane segments spans residues 33–53, 192–212, 235–255, 292–312, 318–338, 347–367, and 417–437; these read CVQI…NFWV, AFVA…FLGG, IASL…MPLF, IYFI…FAVF, FAMF…SFFL, AASI…SILS, and SKII…ALYL. In terms of domain architecture, ABC transporter spans 531–762; that stretch reads VIIEGLTKHY…FGDGYSVRIN (232 aa). 565 to 572 is a binding site for ATP; that stretch reads GANGAGKT.

It belongs to the ABC transporter superfamily. ABCA family.

It is found in the membrane. The polypeptide is ABC transporter A family member 9 (abcA9) (Dictyostelium discoideum (Social amoeba)).